Reading from the N-terminus, the 528-residue chain is Phosphoenolpyruvate carboxykinase (ATP) (528 aa).

Substrate contacts are provided by Arg56, Tyr192, and Lys198. ATP-binding positions include Lys198, His217, and Gly233–Thr241. Residues Lys198 and His217 each coordinate Mn(2+). Residue Asp254 participates in Mn(2+) binding. Residues Glu282, Arg319, and Thr444 each contribute to the ATP site. Arg319 is a binding site for substrate.

This sequence belongs to the phosphoenolpyruvate carboxykinase (ATP) family. Requires Mn(2+) as cofactor.

Its subcellular location is the cytoplasm. It carries out the reaction oxaloacetate + ATP = phosphoenolpyruvate + ADP + CO2. Its pathway is carbohydrate biosynthesis; gluconeogenesis. In terms of biological role, involved in the gluconeogenesis. Catalyzes the conversion of oxaloacetate (OAA) to phosphoenolpyruvate (PEP) through direct phosphoryl transfer between the nucleoside triphosphate and OAA. This Bacillus cereus (strain 03BB102) protein is Phosphoenolpyruvate carboxykinase (ATP).